Here is an 88-residue protein sequence, read N- to C-terminus: Cell division topological specificity factor (88 aa).

This sequence belongs to the MinE family.

Functionally, prevents the cell division inhibition by proteins MinC and MinD at internal division sites while permitting inhibition at polar sites. This ensures cell division at the proper site by restricting the formation of a division septum at the midpoint of the long axis of the cell. The chain is Cell division topological specificity factor from Citrobacter koseri (strain ATCC BAA-895 / CDC 4225-83 / SGSC4696).